The sequence spans 73 residues: Large ribosomal subunit protein bL28 (73 aa).

Belongs to the bacterial ribosomal protein bL28 family.

This chain is Large ribosomal subunit protein bL28, found in Anaeromyxobacter sp. (strain Fw109-5).